The chain runs to 253 residues: uncharacterized protein (253 aa).

The region spanning 4 to 73 (FGKSTADRVK…IDVSGVTVLQ (70 aa)) is the BON 1 domain. Positions 79-93 (AAQTAPTTPAQTSPS) are enriched in low complexity. The interval 79 to 105 (AAQTAPTTPAQTSPSVQDSPSTPVQMP) is disordered. The region spanning 119–188 (DTSRIAKAVL…VDISGLRVAQ (70 aa)) is the BON 2 domain. The region spanning 204–251 (TVYTVKPGDSLSKIAEHYYGDQMEYKKIAHYNNISNPDLIQPGQKLRI) is the LysM domain.

This is an uncharacterized protein from Deinococcus radiodurans (strain ATCC 13939 / DSM 20539 / JCM 16871 / CCUG 27074 / LMG 4051 / NBRC 15346 / NCIMB 9279 / VKM B-1422 / R1).